We begin with the raw amino-acid sequence, 264 residues long: ATP synthase subunit a (264 aa).

6 helical membrane passes run 29-49, 87-107, 134-154, 177-197, 208-228, and 235-255; these read TWHI…LWIF, NALI…MNFM, DVNI…YYSI, IPVN…SLAL, LIFI…SLGV, and LIFH…LTIV.

This sequence belongs to the ATPase A chain family. F-type ATPases have 2 components, CF(1) - the catalytic core - and CF(0) - the membrane proton channel. CF(1) has five subunits: alpha(3), beta(3), gamma(1), delta(1), epsilon(1). CF(0) has three main subunits: a(1), b(2) and c(9-12). The alpha and beta chains form an alternating ring which encloses part of the gamma chain. CF(1) is attached to CF(0) by a central stalk formed by the gamma and epsilon chains, while a peripheral stalk is formed by the delta and b chains.

The protein localises to the cell inner membrane. Key component of the proton channel; it plays a direct role in the translocation of protons across the membrane. The polypeptide is ATP synthase subunit a (Shewanella sp. (strain MR-4)).